A 140-amino-acid polypeptide reads, in one-letter code: Nucleoside diphosphate kinase (140 aa).

Lys11, Phe59, Arg87, Thr93, Arg104, and Asn114 together coordinate ATP. His117 functions as the Pros-phosphohistidine intermediate in the catalytic mechanism.

The protein belongs to the NDK family. Homotetramer. It depends on Mg(2+) as a cofactor.

The protein localises to the cytoplasm. The catalysed reaction is a 2'-deoxyribonucleoside 5'-diphosphate + ATP = a 2'-deoxyribonucleoside 5'-triphosphate + ADP. It carries out the reaction a ribonucleoside 5'-diphosphate + ATP = a ribonucleoside 5'-triphosphate + ADP. In terms of biological role, major role in the synthesis of nucleoside triphosphates other than ATP. The ATP gamma phosphate is transferred to the NDP beta phosphate via a ping-pong mechanism, using a phosphorylated active-site intermediate. This Methylocella silvestris (strain DSM 15510 / CIP 108128 / LMG 27833 / NCIMB 13906 / BL2) protein is Nucleoside diphosphate kinase.